The following is a 439-amino-acid chain: Casein kinase I homolog 3 (439 aa).

The Protein kinase domain maps to 15-286; sequence YRVGKKIGEG…LRSLFDSLLL (272 aa). ATP contacts are provided by residues 21–29 and Lys-44; that span reads IGEGSFGML. The Proton acceptor role is filled by Asp-134. A disordered region spans residues 366–426; it reads DGIPGKAASP…PSKEKSRKKF (61 aa). The span at 372–413 shows a compositional bias: low complexity; that stretch reads AASPQVQQQQQTSSAQQQQPQRVEQPAPQTTQPTQVDTQQAA.

This sequence belongs to the protein kinase superfamily. CK1 Ser/Thr protein kinase family. Casein kinase I subfamily.

Its subcellular location is the cytoplasm. The catalysed reaction is L-seryl-[protein] + ATP = O-phospho-L-seryl-[protein] + ADP + H(+). It catalyses the reaction L-threonyl-[protein] + ATP = O-phospho-L-threonyl-[protein] + ADP + H(+). Functionally, casein kinases are operationally defined by their preferential utilization of acidic proteins such as caseins as substrates. This is Casein kinase I homolog 3 (cki3) from Schizosaccharomyces pombe (strain 972 / ATCC 24843) (Fission yeast).